Here is a 460-residue protein sequence, read N- to C-terminus: Tyrosine phenol-lyase (460 aa).

Residue Lys260 is modified to N6-(pyridoxal phosphate)lysine.

Belongs to the beta-eliminating lyase family. As to quaternary structure, homotetramer. Pyridoxal 5'-phosphate serves as cofactor.

The enzyme catalyses L-tyrosine + H2O = phenol + pyruvate + NH4(+). In Fusobacterium nucleatum subsp. nucleatum (strain ATCC 25586 / DSM 15643 / BCRC 10681 / CIP 101130 / JCM 8532 / KCTC 2640 / LMG 13131 / VPI 4355), this protein is Tyrosine phenol-lyase.